The sequence spans 858 residues: Taste receptor type 1 member 3 (858 aa).

Residues 1–20 (MPGLAILGLSLAAFLELGMG) form the signal peptide. The Extracellular portion of the chain corresponds to 21–575 (SSLCLSQQFK…FLAWGEPAVL (555 aa)). N-linked (GlcNAc...) asparagine glycans are attached at residues Asn-85, Asn-130, Asn-203, Asn-264, Asn-379, Asn-387, Asn-418, Asn-439, and Asn-482. Residues 576 to 596 (SLLLLLCLVLGLTLAALGLFV) traverse the membrane as a helical segment. At 597–610 (HYWDSPLVQASGGS) the chain is on the cytoplasmic side. Residues 611-631 (LFCFGLICLGLFCLSVLLFPG) form a helical membrane-spanning segment. At 632–644 (RPRSASCLAQQPM) the chain is on the extracellular side. The helical transmembrane segment at 645–665 (AHLPLTGCLSTLFLQAAEIFV) threads the bilayer. Residues 666–687 (ESELPLSWANWLCSYLRGPWAW) lie on the Cytoplasmic side of the membrane. Residues 688 to 708 (LVVLLATLVEAALCAWYLMAF) form a helical membrane-spanning segment. The Extracellular portion of the chain corresponds to 709-735 (PPEVVTDWQVLPTEVLEHCRMRSWVSL). The chain crosses the membrane as a helical span at residues 736–756 (GLVHITNAVLAFLCFLGTFLV). At 757–767 (QSQPGRYNRAR) the chain is on the cytoplasmic side. The helical transmembrane segment at 768 to 788 (GLTFAMLAYFIIWVSFVPLLA) threads the bilayer. Residues 789-796 (NVQVAYQP) lie on the Extracellular side of the membrane. A helical transmembrane segment spans residues 797 to 817 (AVQMGAILFCALGILATFHLP). At 818–858 (KCYVLLWLPELNTQEFFLGRSPKEASDGNSGSSEATRGHSE) the chain is on the cytoplasmic side. The segment at 839 to 858 (PKEASDGNSGSSEATRGHSE) is disordered.

The protein belongs to the G-protein coupled receptor 3 family. TAS1R subfamily. In terms of assembly, forms homodimers or heterodimers with TAS1R1 and TAS1R2.

Its subcellular location is the cell membrane. Putative taste receptor. TAS1R1/TAS1R3 responds to the umami taste stimulus (the taste of monosodium glutamate) and also to most of the 20 standard L-amino acids, but not to their D-enantiomers or other compounds. TAS1R2/TAS1R3 recognizes diverse natural and synthetic sweeteners. TAS1R3 is essential for the recognition and response to the disaccharide trehalose. Sequence differences within and between species can significantly influence the selectivity and specificity of taste responses. The sequence is that of Taste receptor type 1 member 3 (Tas1r3) from Rattus norvegicus (Rat).